The chain runs to 235 residues: Large ribosomal subunit protein uL1 (235 aa).

The protein belongs to the universal ribosomal protein uL1 family. Part of the 50S ribosomal subunit.

Binds directly to 23S rRNA. The L1 stalk is quite mobile in the ribosome, and is involved in E site tRNA release. Functionally, protein L1 is also a translational repressor protein, it controls the translation of the L11 operon by binding to its mRNA. In Prochlorococcus marinus (strain MIT 9312), this protein is Large ribosomal subunit protein uL1.